The primary structure comprises 130 residues: MKVNLEWIIKQLQMIVKRAYTPFSNFKVACMIIANNQTFFGVNIENSSFPVTLCAERSAIASMVTSGHRKIDYVFVYFNTKNKSNSPCGMCRQNLLEFSHQKTKLFCIDNDSSYKQFSIDELLMNGFKKS.

Residues Val-3–Ser-130 enclose the CMP/dCMP-type deaminase domain. Asn-43–Glu-45 lines the substrate pocket. Residue Cys-54 coordinates Zn(2+). Glu-56 acts as the Proton donor in catalysis. The Zn(2+) site is built by Cys-88 and Cys-91.

The protein belongs to the cytidine and deoxycytidylate deaminase family. In terms of assembly, homodimer. It depends on Zn(2+) as a cofactor.

It catalyses the reaction cytidine + H2O + H(+) = uridine + NH4(+). The enzyme catalyses 2'-deoxycytidine + H2O + H(+) = 2'-deoxyuridine + NH4(+). Its function is as follows. This enzyme scavenges exogenous and endogenous cytidine and 2'-deoxycytidine for UMP synthesis. The sequence is that of Cytidine deaminase (cdd) from Mycoplasma genitalium (strain ATCC 33530 / DSM 19775 / NCTC 10195 / G37) (Mycoplasmoides genitalium).